We begin with the raw amino-acid sequence, 570 residues long: Proline--tRNA ligase (570 aa).

Belongs to the class-II aminoacyl-tRNA synthetase family. ProS type 1 subfamily. In terms of assembly, homodimer.

It is found in the cytoplasm. The enzyme catalyses tRNA(Pro) + L-proline + ATP = L-prolyl-tRNA(Pro) + AMP + diphosphate. In terms of biological role, catalyzes the attachment of proline to tRNA(Pro) in a two-step reaction: proline is first activated by ATP to form Pro-AMP and then transferred to the acceptor end of tRNA(Pro). As ProRS can inadvertently accommodate and process non-cognate amino acids such as alanine and cysteine, to avoid such errors it has two additional distinct editing activities against alanine. One activity is designated as 'pretransfer' editing and involves the tRNA(Pro)-independent hydrolysis of activated Ala-AMP. The other activity is designated 'posttransfer' editing and involves deacylation of mischarged Ala-tRNA(Pro). The misacylated Cys-tRNA(Pro) is not edited by ProRS. This is Proline--tRNA ligase from Acidithiobacillus ferrooxidans (strain ATCC 23270 / DSM 14882 / CIP 104768 / NCIMB 8455) (Ferrobacillus ferrooxidans (strain ATCC 23270)).